Reading from the N-terminus, the 151-residue chain is Small ribosomal subunit protein uS15 (151 aa).

A disordered region spans residues 1–20; sequence MARLHSGKRGSSGSTKPLRT.

The protein belongs to the universal ribosomal protein uS15 family. As to quaternary structure, part of the 30S ribosomal subunit.

The chain is Small ribosomal subunit protein uS15 from Methanococcus vannielii (strain ATCC 35089 / DSM 1224 / JCM 13029 / OCM 148 / SB).